We begin with the raw amino-acid sequence, 124 residues long: Large ribosomal subunit protein bL12 (124 aa).

This sequence belongs to the bacterial ribosomal protein bL12 family. Homodimer. Part of the ribosomal stalk of the 50S ribosomal subunit. Forms a multimeric L10(L12)X complex, where L10 forms an elongated spine to which 2 to 4 L12 dimers bind in a sequential fashion. Binds GTP-bound translation factors.

Its function is as follows. Forms part of the ribosomal stalk which helps the ribosome interact with GTP-bound translation factors. Is thus essential for accurate translation. This is Large ribosomal subunit protein bL12 from Hamiltonella defensa subsp. Acyrthosiphon pisum (strain 5AT).